Here is a 261-residue protein sequence, read N- to C-terminus: Small ribosomal subunit protein eS1 (261 aa).

The span at 1–18 (MAVGKNKRISKGKKGGKK) shows a compositional bias: basic residues. The interval 1 to 22 (MAVGKNKRISKGKKGGKKKAAD) is disordered.

It belongs to the eukaryotic ribosomal protein eS1 family. In terms of assembly, component of the small ribosomal subunit. Mature ribosomes consist of a small (40S) and a large (60S) subunit. The 40S subunit contains about 33 different proteins and 1 molecule of RNA (18S). The 60S subunit contains about 49 different proteins and 3 molecules of RNA (25S, 5.8S and 5S).

It is found in the cytoplasm. This is Small ribosomal subunit protein eS1 from Cicer arietinum (Chickpea).